Reading from the N-terminus, the 954-residue chain is Glycine dehydrogenase (decarboxylating) (954 aa).

Position 702 is an N6-(pyridoxal phosphate)lysine (Lys702).

It belongs to the GcvP family. As to quaternary structure, the glycine cleavage system is composed of four proteins: P, T, L and H. Requires pyridoxal 5'-phosphate as cofactor.

The enzyme catalyses N(6)-[(R)-lipoyl]-L-lysyl-[glycine-cleavage complex H protein] + glycine + H(+) = N(6)-[(R)-S(8)-aminomethyldihydrolipoyl]-L-lysyl-[glycine-cleavage complex H protein] + CO2. The glycine cleavage system catalyzes the degradation of glycine. The P protein binds the alpha-amino group of glycine through its pyridoxal phosphate cofactor; CO(2) is released and the remaining methylamine moiety is then transferred to the lipoamide cofactor of the H protein. The protein is Glycine dehydrogenase (decarboxylating) of Xanthomonas euvesicatoria pv. vesicatoria (strain 85-10) (Xanthomonas campestris pv. vesicatoria).